A 66-amino-acid chain; its full sequence is Large ribosomal subunit protein bL33c (66 aa).

Belongs to the bacterial ribosomal protein bL33 family.

Its subcellular location is the plastid. It localises to the chloroplast. The chain is Large ribosomal subunit protein bL33c from Citrus sinensis (Sweet orange).